Here is a 553-residue protein sequence, read N- to C-terminus: Protein DA1-related 1 (553 aa).

Residues 10 to 41 (GSSHKFSDGQCNGRYREDRNLEGPRYSAEGSD) are disordered. Residues 42 to 61 (FDKEEIECAIALSLSEQEHV) enclose the UIM 1 domain. The span at 62-77 (IPQDDKGKKIIEYKSE) shows a compositional bias: basic and acidic residues. Positions 62-91 (IPQDDKGKKIIEYKSETEEDDDDDEDEDEE) are disordered. Positions 78–91 (TEEDDDDDEDEDEE) are enriched in acidic residues. The UIM 2 domain maps to 87–106 (DEDEEYMRAQLEAAEEEERR). The UIM 3; degenerate domain maps to 122 to 141 (AQLEETEKLLAKARLEEEEM). Residues 149–168 (EEDELLAKALQESMNVGSPP) enclose the UIM 4 domain. Position 166 is a phosphoserine (Ser-166). An LIM zinc-binding domain is found at 188-248 (RICVGCQAEI…KLCYKEQHHP (61 aa)).

Interacts with ubiquitin, TCP14 and TCP15. Polyubiquitinated by DA2.

Functionally, acts redundantly with DA1 and DAR2 to regulate endoreduplication during leaf development. Together with DA1 and DAR2, modulates the protein stability of the transcription factors TCP14 and TCP15, which repress endoreduplication by directly regulating the expression of cell-cycle genes. This chain is Protein DA1-related 1, found in Arabidopsis thaliana (Mouse-ear cress).